The following is a 340-amino-acid chain: Holliday junction branch migration complex subunit RuvB (340 aa).

Residues 4–184 (TDRIVGGQSL…FGIVQRLEFY (181 aa)) are large ATPase domain (RuvB-L). ATP is bound by residues Arg-24, Gly-65, Lys-68, Thr-69, Thr-70, 131 to 133 (EDF), Arg-174, Tyr-184, and Arg-221. Position 69 (Thr-69) interacts with Mg(2+). Residues 185-255 (SIEELAQIVT…IADLALNLLE (71 aa)) are small ATPAse domain (RuvB-S). Residues 258 to 340 (PLGLDKMDRR…TMPERNLEDE (83 aa)) form a head domain (RuvB-H) region. DNA-binding residues include Arg-294, Arg-313, and Arg-318.

Belongs to the RuvB family. Homohexamer. Forms an RuvA(8)-RuvB(12)-Holliday junction (HJ) complex. HJ DNA is sandwiched between 2 RuvA tetramers; dsDNA enters through RuvA and exits via RuvB. An RuvB hexamer assembles on each DNA strand where it exits the tetramer. Each RuvB hexamer is contacted by two RuvA subunits (via domain III) on 2 adjacent RuvB subunits; this complex drives branch migration. In the full resolvosome a probable DNA-RuvA(4)-RuvB(12)-RuvC(2) complex forms which resolves the HJ.

The protein resides in the cytoplasm. It catalyses the reaction ATP + H2O = ADP + phosphate + H(+). Its function is as follows. The RuvA-RuvB-RuvC complex processes Holliday junction (HJ) DNA during genetic recombination and DNA repair, while the RuvA-RuvB complex plays an important role in the rescue of blocked DNA replication forks via replication fork reversal (RFR). RuvA specifically binds to HJ cruciform DNA, conferring on it an open structure. The RuvB hexamer acts as an ATP-dependent pump, pulling dsDNA into and through the RuvAB complex. RuvB forms 2 homohexamers on either side of HJ DNA bound by 1 or 2 RuvA tetramers; 4 subunits per hexamer contact DNA at a time. Coordinated motions by a converter formed by DNA-disengaged RuvB subunits stimulates ATP hydrolysis and nucleotide exchange. Immobilization of the converter enables RuvB to convert the ATP-contained energy into a lever motion, pulling 2 nucleotides of DNA out of the RuvA tetramer per ATP hydrolyzed, thus driving DNA branch migration. The RuvB motors rotate together with the DNA substrate, which together with the progressing nucleotide cycle form the mechanistic basis for DNA recombination by continuous HJ branch migration. Branch migration allows RuvC to scan DNA until it finds its consensus sequence, where it cleaves and resolves cruciform DNA. This chain is Holliday junction branch migration complex subunit RuvB, found in Hydrogenovibrio crunogenus (strain DSM 25203 / XCL-2) (Thiomicrospira crunogena).